Reading from the N-terminus, the 332-residue chain is Tetraacyldisaccharide 4'-kinase (332 aa).

60–67 (TVGGTGKT) contacts ATP.

The protein belongs to the LpxK family.

It carries out the reaction a lipid A disaccharide + ATP = a lipid IVA + ADP + H(+). Its pathway is glycolipid biosynthesis; lipid IV(A) biosynthesis; lipid IV(A) from (3R)-3-hydroxytetradecanoyl-[acyl-carrier-protein] and UDP-N-acetyl-alpha-D-glucosamine: step 6/6. In terms of biological role, transfers the gamma-phosphate of ATP to the 4'-position of a tetraacyldisaccharide 1-phosphate intermediate (termed DS-1-P) to form tetraacyldisaccharide 1,4'-bis-phosphate (lipid IVA). The polypeptide is Tetraacyldisaccharide 4'-kinase (Pseudomonas aeruginosa (strain LESB58)).